The following is a 371-amino-acid chain: Glutamate 5-kinase (371 aa).

Lys-14 serves as a coordination point for ATP. Substrate is bound by residues Ser-54, Asp-141, and Asn-153. ATP is bound at residue 173–174 (TD). A PUA domain is found at 280–357 (AGSLIVDAGA…SDIEQLLGYI (78 aa)).

The protein belongs to the glutamate 5-kinase family.

Its subcellular location is the cytoplasm. It catalyses the reaction L-glutamate + ATP = L-glutamyl 5-phosphate + ADP. Its pathway is amino-acid biosynthesis; L-proline biosynthesis; L-glutamate 5-semialdehyde from L-glutamate: step 1/2. In terms of biological role, catalyzes the transfer of a phosphate group to glutamate to form L-glutamate 5-phosphate. The sequence is that of Glutamate 5-kinase from Azoarcus sp. (strain BH72).